Consider the following 299-residue polypeptide: Apolipoprotein E (299 aa).

Positions 1–18 are cleaved as a signal peptide; the sequence is MKALWAVLVVTLLAGCRA. 8 repeat units span residues 74–95, 96–117, 118–139, 140–161, 162–183, 184–205, 206–223, and 224–245. Residues 74 to 245 are 8 X 22 AA approximate tandem repeats; it reads VLMEDTMKEV…RLDEVREQME (172 aa). The interval 152–162 is LDL and other lipoprotein receptors binding; that stretch reads HLRKLRKRLLR. 156-159 serves as a coordination point for heparin; that stretch reads LRKR. The segment at 204-273 is lipid-binding and lipoprotein association; the sequence is AALTGQPLRE…GWFEPMMEDM (70 aa). 219–226 contributes to the heparin binding site; it reads GERLRGRL. The tract at residues 261-273 is specificity for association with VLDL; sequence RLKGWFEPMMEDM.

It belongs to the apolipoprotein A1/A4/E family. In terms of assembly, homotetramer. May interact with ABCA1; functionally associated with ABCA1 in the biogenesis of HDLs. May interact with APP/A4 amyloid-beta peptide; the interaction is extremely stable in vitro but its physiological significance is unclear. May interact with MAPT. May interact with MAP2. In the cerebrospinal fluid, interacts with secreted SORL1. Interacts with PMEL; this allows the loading of PMEL luminal fragment on ILVs to induce fibril nucleation. In terms of processing, APOE exists as multiple glycosylated and sialylated glycoforms within cells and in plasma. The extent of glycosylation and sialylation are tissue and context specific. Post-translationally, glycated in plasma VLDL. Phosphorylated by FAM20C in the extracellular medium.

It localises to the secreted. The protein localises to the extracellular space. It is found in the extracellular matrix. Its subcellular location is the extracellular vesicle. The protein resides in the endosome. It localises to the multivesicular body. Its function is as follows. APOE is an apolipoprotein, a protein associating with lipid particles, that mainly functions in lipoprotein-mediated lipid transport between organs via the plasma and interstitial fluids. APOE is a core component of plasma lipoproteins and is involved in their production, conversion and clearance. Apolipoproteins are amphipathic molecules that interact both with lipids of the lipoprotein particle core and the aqueous environment of the plasma. As such, APOE associates with chylomicrons, chylomicron remnants, very low density lipoproteins (VLDL) and intermediate density lipoproteins (IDL) but shows a preferential binding to high-density lipoproteins (HDL). It also binds a wide range of cellular receptors including the LDL receptor/LDLR and the very low-density lipoprotein receptor/VLDLR that mediate the cellular uptake of the APOE-containing lipoprotein particles. Finally, APOE also has a heparin-binding activity and binds heparan-sulfate proteoglycans on the surface of cells, a property that supports the capture and the receptor-mediated uptake of APOE-containing lipoproteins by cells. This Heterocephalus glaber (Naked mole rat) protein is Apolipoprotein E (APOE).